The sequence spans 265 residues: Hydroxyethylthiazole kinase (265 aa).

Residue methionine 55 coordinates substrate. ATP contacts are provided by arginine 130 and serine 176. Residue glycine 203 coordinates substrate.

It belongs to the Thz kinase family. Mg(2+) is required as a cofactor.

The enzyme catalyses 5-(2-hydroxyethyl)-4-methylthiazole + ATP = 4-methyl-5-(2-phosphooxyethyl)-thiazole + ADP + H(+). It participates in cofactor biosynthesis; thiamine diphosphate biosynthesis; 4-methyl-5-(2-phosphoethyl)-thiazole from 5-(2-hydroxyethyl)-4-methylthiazole: step 1/1. Functionally, catalyzes the phosphorylation of the hydroxyl group of 4-methyl-5-beta-hydroxyethylthiazole (THZ). In Leptospira interrogans serogroup Icterohaemorrhagiae serovar Lai (strain 56601), this protein is Hydroxyethylthiazole kinase.